The primary structure comprises 297 residues: tRNA pseudouridine synthase A (297 aa).

Catalysis depends on D57, which acts as the Nucleophile. Y115 provides a ligand contact to substrate.

The protein belongs to the tRNA pseudouridine synthase TruA family. In terms of assembly, homodimer.

It catalyses the reaction uridine(38/39/40) in tRNA = pseudouridine(38/39/40) in tRNA. Functionally, formation of pseudouridine at positions 38, 39 and 40 in the anticodon stem and loop of transfer RNAs. The polypeptide is tRNA pseudouridine synthase A (Nitratidesulfovibrio vulgaris (strain ATCC 29579 / DSM 644 / CCUG 34227 / NCIMB 8303 / VKM B-1760 / Hildenborough) (Desulfovibrio vulgaris)).